Reading from the N-terminus, the 511-residue chain is Inactive cytochrome P450 monooxygenase cloA (511 aa).

Residues 17–37 (ILLTAGLCVPCALVIHGIYNL) traverse the membrane as a helical segment. Asn-81 and Asn-344 each carry an N-linked (GlcNAc...) asparagine glycan. Cys-450 is a binding site for heme.

Belongs to the cytochrome P450 family. The cofactor is heme.

It localises to the membrane. Its function is as follows. Inactive cytochrome P450 monooxygenase; part of the gene cluster that mediates the biosynthesis of fungal ergot alkaloid. DmaW catalyzes the first step of ergot alkaloid biosynthesis by condensing dimethylallyl diphosphate (DMAP) and tryptophan to form 4-dimethylallyl-L-tryptophan. The second step is catalyzed by the methyltransferase easF that methylates 4-dimethylallyl-L-tryptophan in the presence of S-adenosyl-L-methionine, resulting in the formation of 4-dimethylallyl-L-abrine. The catalase easC and the FAD-dependent oxidoreductase easE then transform 4-dimethylallyl-L-abrine to chanoclavine-I which is further oxidized by easD in the presence of NAD(+), resulting in the formation of chanoclavine-I aldehyde. Agroclavine dehydrogenase easG then mediates the conversion of chanoclavine-I aldehyde to agroclavine via a non-enzymatic adduct reaction: the substrate is an iminium intermediate that is formed spontaneously from chanoclavine-I aldehyde in the presence of glutathione. Further conversion of agroclavine to paspalic acid is a two-step process involving oxidation of agroclavine to elymoclavine and of elymoclavine to paspalic acid, the second step being performed by the elymoclavine oxidase cloA. However, cloA does not encode a functional enzyme indicating that C.fusiformis terminates its ergot alkaloid pathway at elymoclavine. The polypeptide is Inactive cytochrome P450 monooxygenase cloA (Claviceps fusiformis (Ergot fungus)).